Consider the following 142-residue polypeptide: RNA polymerase-binding transcription factor DksA (142 aa).

Disordered regions lie at residues M1 to P20, H51 to T70, and R119 to D142. A dksA C4-type zinc finger spans residues C104–A128. The segment covering A128–D142 has biased composition (basic and acidic residues).

This sequence belongs to the DksA family. As to quaternary structure, interacts directly with the RNA polymerase.

The protein resides in the cytoplasm. In terms of biological role, transcription factor that acts by binding directly to the RNA polymerase (RNAP). Required for negative regulation of rRNA expression and positive regulation of several amino acid biosynthesis promoters. The polypeptide is RNA polymerase-binding transcription factor DksA (Caulobacter vibrioides (strain ATCC 19089 / CIP 103742 / CB 15) (Caulobacter crescentus)).